The chain runs to 61 residues: Small ribosomal subunit protein uS14 (61 aa).

Residues Cys24, Cys27, Cys40, and Cys43 each coordinate Zn(2+).

This sequence belongs to the universal ribosomal protein uS14 family. Zinc-binding uS14 subfamily. In terms of assembly, part of the 30S ribosomal subunit. Contacts proteins S3 and S10. The cofactor is Zn(2+).

Functionally, binds 16S rRNA, required for the assembly of 30S particles and may also be responsible for determining the conformation of the 16S rRNA at the A site. In Geobacter sp. (strain M21), this protein is Small ribosomal subunit protein uS14.